The following is a 148-amino-acid chain: Putative pre-16S rRNA nuclease (148 aa).

Belongs to the YqgF nuclease family.

It is found in the cytoplasm. Functionally, could be a nuclease involved in processing of the 5'-end of pre-16S rRNA. The chain is Putative pre-16S rRNA nuclease from Chromohalobacter salexigens (strain ATCC BAA-138 / DSM 3043 / CIP 106854 / NCIMB 13768 / 1H11).